Consider the following 123-residue polypeptide: Probable histone H2B 4 (123 aa).

Residues Met1–Ala30 are disordered. Ser110 is a glycosylation site (O-linked (GlcNAc) serine). Lys118 is covalently cross-linked (Glycyl lysine isopeptide (Lys-Gly) (interchain with G-Cter in ubiquitin)).

The protein belongs to the histone H2B family. As to quaternary structure, the nucleosome is a histone octamer containing two molecules each of H2A, H2B, H3 and H4 assembled in one H3-H4 heterotetramer and two H2A-H2B heterodimers. The octamer wraps approximately 147 bp of DNA. Monoubiquitination of Lys-118 gives a specific tag for epigenetic transcriptional activation and is also prerequisite for histone H3 'Lys-4' and 'Lys-79' methylation. Post-translationally, glcNAcylation at Ser-110 promotes monoubiquitination of Lys-118. It fluctuates in response to extracellular glucose, and associates with transcribed genes.

It is found in the nucleus. The protein localises to the chromosome. Core component of nucleosome. Nucleosomes wrap and compact DNA into chromatin, limiting DNA accessibility to the cellular machineries which require DNA as a template. Histones thereby play a central role in transcription regulation, DNA repair, DNA replication and chromosomal stability. DNA accessibility is regulated via a complex set of post-translational modifications of histones, also called histone code, and nucleosome remodeling. This Caenorhabditis elegans protein is Probable histone H2B 4 (his-48).